Consider the following 259-residue polypeptide: BTB/POZ domain-containing protein KCTD4 (259 aa).

Residues 1–22 (MEHKINRREKEKDYEGKHNSLE) are disordered. Residues 33–134 (TLMTLNVGGY…EVKSRWEKEQ (102 aa)) enclose the BTB domain.

The protein is BTB/POZ domain-containing protein KCTD4 (KCTD4) of Bos taurus (Bovine).